Reading from the N-terminus, the 132-residue chain is D-ribose pyranase (132 aa).

His20 serves as the catalytic Proton donor. Substrate is bound by residues Asp28, His99, and 121-123 (YSN).

This sequence belongs to the RbsD / FucU family. RbsD subfamily. In terms of assembly, homodecamer.

The protein localises to the cytoplasm. It catalyses the reaction beta-D-ribopyranose = beta-D-ribofuranose. Its pathway is carbohydrate metabolism; D-ribose degradation; D-ribose 5-phosphate from beta-D-ribopyranose: step 1/2. In terms of biological role, catalyzes the interconversion of beta-pyran and beta-furan forms of D-ribose. The protein is D-ribose pyranase of Lactococcus lactis subsp. lactis (strain IL1403) (Streptococcus lactis).